A 571-amino-acid polypeptide reads, in one-letter code: Glutamate--tRNA ligase (571 aa).

The 'HIGH' region signature appears at 38–48 (PSPTGFMHIGG). The short motif at 316-320 (KLSKR) is the 'KMSKS' region element. Residue Lys319 coordinates ATP.

The protein belongs to the class-I aminoacyl-tRNA synthetase family. Glutamate--tRNA ligase type 1 subfamily. Monomer.

It is found in the cytoplasm. It catalyses the reaction tRNA(Glu) + L-glutamate + ATP = L-glutamyl-tRNA(Glu) + AMP + diphosphate. Functionally, catalyzes the attachment of glutamate to tRNA(Glu) in a two-step reaction: glutamate is first activated by ATP to form Glu-AMP and then transferred to the acceptor end of tRNA(Glu). This chain is Glutamate--tRNA ligase, found in Sorangium cellulosum (strain So ce56) (Polyangium cellulosum (strain So ce56)).